A 334-amino-acid chain; its full sequence is MKKNQFLKESDVTAESVFFMKRRQVLKALGISAAALSLPHAAHADLLSWFKGNDRPLAPAGKPLEFSKPAAWQNNLPLTPVDKVSGYNNFYEFGLDKADPAANAGSLKTDPWTLKISGEVAKPLTLDHDDLTRRFPLEERIYRMRCVEAWSMVVPWIGFPLHKLLALAEPTSNAKYVAFETIYAPEQMPGQQDRFIGGGLKYPYVEGLRLDEAMHPLTLMTVGVYGKALPPQNGAPVRLIVPWKYGFKGIKSIVSIKLTRERPPTTWNLAAPDEYGFYANVNPHVDHPRWSQATERFIGSGGILDVQRQPTLLFNGYADQVASLYRGLDLRENF.

Positions 1 to 44 (MKKNQFLKESDVTAESVFFMKRRQVLKALGISAAALSLPHAAHA) form a signal peptide, tat-type signal. Residues Asn88, 91 to 92 (YE), Cys146, Thr181, Asn233, Arg238, and 249 to 251 (GIK) each bind Mo-molybdopterin.

The protein belongs to the MsrP family. Heterodimer of a catalytic subunit (MsrP) and a heme-binding subunit (MsrQ). It depends on Mo-molybdopterin as a cofactor. In terms of processing, predicted to be exported by the Tat system. The position of the signal peptide cleavage has not been experimentally proven.

It localises to the periplasm. It carries out the reaction L-methionyl-[protein] + a quinone + H2O = L-methionyl-(S)-S-oxide-[protein] + a quinol. The catalysed reaction is L-methionyl-[protein] + a quinone + H2O = L-methionyl-(R)-S-oxide-[protein] + a quinol. Functionally, part of the MsrPQ system that repairs oxidized periplasmic proteins containing methionine sulfoxide residues (Met-O), using respiratory chain electrons. Thus protects these proteins from oxidative-stress damage caused by reactive species of oxygen and chlorine generated by the host defense mechanisms. MsrPQ is essential for the maintenance of envelope integrity under bleach stress, rescuing a wide series of structurally unrelated periplasmic proteins from methionine oxidation, including the primary periplasmic chaperone SurA and the lipoprotein Pal. The catalytic subunit MsrP is non-stereospecific, being able to reduce both (R-) and (S-) diastereoisomers of methionine sulfoxide. In Escherichia coli O9:H4 (strain HS), this protein is Protein-methionine-sulfoxide reductase catalytic subunit MsrP.